The sequence spans 521 residues: Importin subunit alpha-3 (521 aa).

Ala-2 is modified (N-acetylalanine). Residues 2–58 form the IBB domain; that stretch reads ADNEKLDNQRLKNFKNKGRDLETMRRQRNEVVVELRKNKRDEHLLKRRNVPHEDICE. The short motif at 43-52 is the Nuclear localization signal element; it reads EHLLKRRNVP. Position 60 is a phosphoserine (Ser-60). One copy of the ARM 1; truncated repeat lies at 66–106; it reads YRVQNTSLEAIVQNASSDNQGIQLSAVQAARKLLSSDRNPP. ARM repeat units follow at residues 107-149, 150-194, 195-233, 234-278, 279-318, 319-360, 361-400, and 401-443; these read IDDL…TSEQ, TQAV…CRDY, VISL…HKDP, PPPM…EQIQ, MVID…TDEQ, TQVV…NQQQ, VQAV…ISGR, and KDQV…KMAE. Residues 137–229 are NLS binding site (major); the sequence is WALTNIASGT…VTWVMVNLCR (93 aa). Positions 306–394 are NLS binding site (minor); the sequence is RAVGNIVTGT…QKEAAWAISN (89 aa). The ARM 10; atypical repeat unit spans residues 447–485; sequence ETIGNLIEECGGLEKIEQLQNHENEDIYKLAYEIIDQFF.

This sequence belongs to the importin alpha family. Forms a complex with importin subunit beta-1 (KPNB1). Interacts with SNAI1. Interacts with TALDO1 isoform 1. Interacts with CYB1. In terms of assembly, (Microbial infection) Interacts with MERS virus protein OF4b; this interaction prevents the translocation of NF-kappa-B complex to the nucleus. As to quaternary structure, (Microbial infection) Interacts with human adenovirus 5 E1A protein; this interaction allows E1A import into the host nucleus. (Microbial infection) Interacts with Chikungunya virus capsid protein; this interaction allows the nuclear import of the viral capsid protein. In terms of tissue distribution, highly expressed in testis, ovary, small intestine, heart, skeletal muscle, lung and pancreas, but barely detectable in kidney, thymus, colon and peripheral blood leukocytes.

The protein localises to the cytoplasm. The protein resides in the nucleus. Functionally, functions in nuclear protein import as an adapter protein for nuclear receptor KPNB1. Binds specifically and directly to substrates containing either a simple or bipartite NLS motif. Docking of the importin/substrate complex to the nuclear pore complex (NPC) is mediated by KPNB1 through binding to nucleoporin FxFG repeats and the complex is subsequently translocated through the pore by an energy requiring, Ran-dependent mechanism. At the nucleoplasmic side of the NPC, Ran binds to importin-beta and the three components separate and importin-alpha and -beta are re-exported from the nucleus to the cytoplasm where GTP hydrolysis releases Ran from importin. The directionality of nuclear import is thought to be conferred by an asymmetric distribution of the GTP- and GDP-bound forms of Ran between the cytoplasm and nucleus. Mediates nuclear import of AARS1, MRTFA and RANBP3. (Microbial infection) In vitro, mediates the nuclear import of human cytomegalovirus UL84 by recognizing a non-classical NLS. In vitro, mediates the nuclear import of human cytomegalovirus UL84 by recognizing a non-classical NLS. The chain is Importin subunit alpha-3 from Homo sapiens (Human).